The following is a 526-amino-acid chain: Vang-like protein 1 (526 aa).

Residues 1-15 (MDTESTYSGYSYYSS) are compositionally biased toward low complexity. A disordered region spans residues 1-87 (MDTESTYSGY…TTAITGTSEH (87 aa)). At 1–114 (MDTESTYSGY…VGLDCKRYLG (114 aa)) the chain is on the cytoplasmic side. Residues 75 to 87 (GETTTAITGTSEH) show a composition bias toward polar residues. Residues Ser-88 and Ser-90 each carry the phosphoserine modification. Residues 115–135 (LTVASFLGLLVFLTPIAFILL) traverse the membrane as a helical segment. The Extracellular portion of the chain corresponds to 136-153 (PQILWREELKPCGAICEG). The helical transmembrane segment at 154–174 (LLISVSFKLLILLIGTWALFF) threads the bilayer. The Cytoplasmic portion of the chain corresponds to 175–184 (RKQRADVPRV). The helical transmembrane segment at 185 to 205 (FVFRALLLVLIFLFVVSYWLF) threads the bilayer. Over 206 to 224 (YGVRILDSRDQNYKDIVQY) the chain is Extracellular. The chain crosses the membrane as a helical span at residues 225 to 245 (AVSLVDALLFIHYLAIVLLEL). Over 246 to 526 (RQLQPMFTLQ…VLRLQSETSV (281 aa)) the chain is Cytoplasmic.

Belongs to the Vang family. Heterodimer with Vangl2. Interacts through its C-terminal region with the N-terminal half of DVL1, DVL2 and DVL3. The PDZ domain of DVL1, DVL2 and DVL3 is required for the interaction.

It localises to the cell membrane. The protein is Vang-like protein 1 (Vangl1) of Mus musculus (Mouse).